A 1982-amino-acid polypeptide reads, in one-letter code: CASP8-associated protein 2 (1982 aa).

Ala-2 bears the N-acetylalanine mark. Ser-20 carries the post-translational modification Phosphoserine. Basic and acidic residues predominate over residues 159-191 (VKTKDLKSRSPHLDDCSKTDHRAKSDVSKDVHH). Residues 159–552 (VKTKDLKSRS…ESGPNETKNK (394 aa)) form a disordered region. Phosphoserine is present on Ser-194. Residues 198-210 (LEKEGKPHSDKRS) are compositionally biased toward basic and acidic residues. The span at 225 to 240 (GVWSRSHYQVGEGSSN) shows a compositional bias: polar residues. Over residues 286 to 395 (GHPEKYGKGE…ERASLPHSKN (110 aa)) the composition is skewed to basic and acidic residues. Polar residues predominate over residues 396–405 (EITFSHNSSK). 3 stretches are compositionally biased toward basic and acidic residues: residues 406–423 (YHLE…DKSV), 444–455 (KNIDSKEVDAMH), and 463–524 (KAER…KGEV). At Ser-567 the chain carries Phosphoserine. The disordered stretch occupies residues 569-593 (AKKQPVSQDNQHKITDIPKSSGVCD). A phosphoserine mark is found at Ser-658, Ser-815, and Ser-875. Disordered regions lie at residues 875 to 1017 (SPPQ…DKVM), 1157 to 1188 (FGRD…DNSN), and 1251 to 1283 (ERSL…HATL). A compositionally biased stretch (polar residues) spans 894–904 (SAHSTSKSQSD). Composition is skewed to basic and acidic residues over residues 905–924 (LNKE…EADT), 936–965 (GEIR…DVRK), 999–1016 (KRPD…KDKV), and 1157–1170 (FGRD…EKTS). Ser-940 bears the Phosphoserine mark. At Ser-1161 the chain carries Phosphoserine. 2 stretches are compositionally biased toward polar residues: residues 1171-1181 (KQNAQYSNSQK) and 1269-1281 (GSSI…SQHA). Lys-1343 is subject to N6-acetyllysine. An SUMO interaction motif 1 (SIM); mediates the binding to polysumoylated substrates motif is present at residues 1683–1687 (YVDLT). The NCOA2-binding stretch occupies residues 1709–1982 (DQLGCSGGNL…MKLFEKSKCR (274 aa)). Positions 1737 to 1741 (FIDLT) match the SUMO interaction motif 2 (SIM); mediates the binding to polysumoylated substrates motif. The SUMO interaction motif 3 (SIM); mediates the binding to polysumoylated substrates motif lies at 1794-1798 (YIDLT). The segment at 1803 to 1909 (SSCEVKKDEL…IKDSSAALAT (107 aa)) is disordered. The segment covering 1851–1865 (KETDLTNKEKTKKPT) has biased composition (basic and acidic residues).

As to quaternary structure, self-associates. Component of the death-inducing signaling complex (DISC) with CASP8, FADD and FAS. Interacts with NCOA2 and NCOA3. Interacts with SRRT. Interacts with TRAF2. Interacts with NPAT. Interacts (via SIM domains) with SUMO1 and SUMO2. Interacts with SP100; may negatively regulate CASP8AP2 export from the nucleus to the cytoplasm.

Its subcellular location is the cytoplasm. The protein resides in the nucleus. It localises to the PML body. It is found in the mitochondrion. Participates in TNF-alpha-induced blockade of glucocorticoid receptor (GR) transactivation at the nuclear receptor coactivator level, upstream and independently of NF-kappa-B. Suppresses both NCOA2- and NCOA3-induced enhancement of GR transactivation. Involved in TNF-alpha-induced activation of NF-kappa-B via a TRAF2-dependent pathway. Acts as a downstream mediator for CASP8-induced activation of NF-kappa-B. Required for the activation of CASP8 in FAS-mediated apoptosis. Required for histone gene transcription and progression through S phase. The protein is CASP8-associated protein 2 of Homo sapiens (Human).